Here is a 1465-residue protein sequence, read N- to C-terminus: Ankyrin and armadillo repeat-containing protein (1465 aa).

A helical membrane pass occupies residues 313–329 (MGYLKLICFLIPFLLSL). 5 ANK repeats span residues 532 to 561 (AGYAIFHHAALHNRVSVICQLWSANFNVNQ), 582 to 611 (NGPTPLHLAAQACSLEATICLLCFKADYTL), 615 to 644 (RGWMPIHFAAFYDNICILIALCRKDPSLLE), 651 to 680 (NQCTPLLLAATSGALDTIQYLFSLGANWRK), and 684 to 714 (KGNNIIHLSVLAFHTEVLKYIIELNIPELPV). ARM repeat units follow at residues 745–784 (DRYWQCILDAGTIPALVNLLKSPQIKLQYKTVGLLSNIST), 786–825 (VSIVHAIVEAGGIPAVINLLTSDEPELHSRCAIILYDVAK), 827–865 (ENKDVIAKYSGIPALINLLSLNKESVLVNVMNCIRVLCM), 868–907 (ESNQQSMKDNNGIQYLIQFLSSDSDVLKALSSATIAEVAR), 910–949 (KEVQDAIAKEGAIPPLVTLFKGKQLSVQVKGAMAVESLAN), and 1085–1125 (PMSQ…CIVL). The interval 1431 to 1465 (KLGKDEQKANPDPPAFLNKLGKDEQNANPDPAESQ) is disordered.

It is found in the membrane. The protein is Ankyrin and armadillo repeat-containing protein (Ankar) of Mus musculus (Mouse).